A 163-amino-acid polypeptide reads, in one-letter code: Zinc finger A20 and AN1 domain-containing stress-associated protein 3 (163 aa).

An A20-type zinc finger spans residues 7 to 41; sequence LQEPRLCANNCGFFGSTATQNLCSKCFRDLQHQEQ. Positions 13, 17, 29, and 32 each coordinate Zn(2+). The tract at residues 57-101 is disordered; sequence VGAAASSSVSPPPPPPADSKEIVEAKSEKRAAAEPEEADGPPQDP. A compositionally biased stretch (basic and acidic residues) spans 74–89; that stretch reads DSKEIVEAKSEKRAAA. The segment at 98–144 adopts an AN1-type zinc-finger fold; sequence PQDPKRCLTCRRRVGITGFRCRCGFVFCGTHRYAEQHECSFDFKRMG. Cysteine 104, cysteine 107, cysteine 118, cysteine 120, cysteine 125, histidine 128, histidine 134, and cysteine 136 together coordinate Zn(2+).

May be involved in environmental stress response. This chain is Zinc finger A20 and AN1 domain-containing stress-associated protein 3 (SAP3), found in Arabidopsis thaliana (Mouse-ear cress).